We begin with the raw amino-acid sequence, 157 residues long: Crossover junction endodeoxyribonuclease RuvC (157 aa).

Active-site residues include D7, E67, and D140. Mg(2+)-binding residues include D7, E67, and D140.

This sequence belongs to the RuvC family. In terms of assembly, homodimer which binds Holliday junction (HJ) DNA. The HJ becomes 2-fold symmetrical on binding to RuvC with unstacked arms; it has a different conformation from HJ DNA in complex with RuvA. In the full resolvosome a probable DNA-RuvA(4)-RuvB(12)-RuvC(2) complex forms which resolves the HJ. The cofactor is Mg(2+).

The protein localises to the cytoplasm. It carries out the reaction Endonucleolytic cleavage at a junction such as a reciprocal single-stranded crossover between two homologous DNA duplexes (Holliday junction).. Its function is as follows. The RuvA-RuvB-RuvC complex processes Holliday junction (HJ) DNA during genetic recombination and DNA repair. Endonuclease that resolves HJ intermediates. Cleaves cruciform DNA by making single-stranded nicks across the HJ at symmetrical positions within the homologous arms, yielding a 5'-phosphate and a 3'-hydroxyl group; requires a central core of homology in the junction. The consensus cleavage sequence is 5'-(A/T)TT(C/G)-3'. Cleavage occurs on the 3'-side of the TT dinucleotide at the point of strand exchange. HJ branch migration catalyzed by RuvA-RuvB allows RuvC to scan DNA until it finds its consensus sequence, where it cleaves and resolves the cruciform DNA. This is Crossover junction endodeoxyribonuclease RuvC from Thermosipho melanesiensis (strain DSM 12029 / CIP 104789 / BI429).